A 651-amino-acid chain; its full sequence is DNA mismatch repair protein MutL (651 aa).

The interval T383 to Q405 is disordered.

The protein belongs to the DNA mismatch repair MutL/HexB family.

Its function is as follows. This protein is involved in the repair of mismatches in DNA. It is required for dam-dependent methyl-directed DNA mismatch repair. May act as a 'molecular matchmaker', a protein that promotes the formation of a stable complex between two or more DNA-binding proteins in an ATP-dependent manner without itself being part of a final effector complex. The protein is DNA mismatch repair protein MutL of Lacticaseibacillus paracasei (strain ATCC 334 / BCRC 17002 / CCUG 31169 / CIP 107868 / KCTC 3260 / NRRL B-441) (Lactobacillus paracasei).